We begin with the raw amino-acid sequence, 250 residues long: Flavin-dependent thymidylate synthase (250 aa).

The ThyX domain occupies 7-233 (LRVQLIAKTE…PQVFSDFEIV (227 aa)). Residues serine 71, 95–97 (RHR), and glutamine 103 contribute to the FAD site. DUMP is bound by residues 92–95 (ELIR), 103–107 (QLSQR), and arginine 172. Positions 95 to 105 (RHRHFSYSQLS) match the ThyX motif motif. FAD is bound by residues 188-190 (NYR) and histidine 194. Arginine 199 serves as a coordination point for dUMP. Residue arginine 199 is the Involved in ionization of N3 of dUMP, leading to its activation of the active site.

This sequence belongs to the thymidylate synthase ThyX family. In terms of assembly, homotetramer. The cofactor is FAD.

It catalyses the reaction dUMP + (6R)-5,10-methylene-5,6,7,8-tetrahydrofolate + NADPH + H(+) = dTMP + (6S)-5,6,7,8-tetrahydrofolate + NADP(+). It functions in the pathway pyrimidine metabolism; dTTP biosynthesis. Catalyzes the reductive methylation of 2'-deoxyuridine-5'-monophosphate (dUMP) to 2'-deoxythymidine-5'-monophosphate (dTMP) while utilizing 5,10-methylenetetrahydrofolate (mTHF) as the methyl donor, and NADPH and FADH(2) as the reductant. This chain is Flavin-dependent thymidylate synthase, found in Mycolicibacterium vanbaalenii (strain DSM 7251 / JCM 13017 / BCRC 16820 / KCTC 9966 / NRRL B-24157 / PYR-1) (Mycobacterium vanbaalenii).